Consider the following 420-residue polypeptide: Transcription activator GLK1 (420 aa).

The disordered stretch occupies residues G74–R152. A compositionally biased stretch (basic and acidic residues) spans K106–V117. Residues S135 to N147 are compositionally biased toward low complexity. A DNA-binding region (myb-like GARP) is located at residues G150–K209.

In terms of assembly, interacts with NAC92. Expressed in rosette and cauline leaves. Expressed at low levels in cotyledons and shoots.

It is found in the nucleus. Transcriptional activator that functions with GLK2 to promote chloroplast development. Acts as an activator of nuclear photosynthetic genes involved in chlorophyll biosynthesis, light harvesting, and electron transport. Acts in a cell-autonomous manner to coordinate and maintain the photosynthetic apparatus within individual cells. May function in photosynthetic capacity optimization by integrating responses to variable environmental and endogenous cues. Prevents premature senescence. In Arabidopsis thaliana (Mouse-ear cress), this protein is Transcription activator GLK1 (GLK1).